Consider the following 527-residue polypeptide: Glucose-6-phosphate isomerase (527 aa).

The active-site Proton donor is the E347. Residues H378 and K493 contribute to the active site.

The protein belongs to the GPI family.

The protein localises to the cytoplasm. It carries out the reaction alpha-D-glucose 6-phosphate = beta-D-fructose 6-phosphate. Its pathway is carbohydrate biosynthesis; gluconeogenesis. It functions in the pathway carbohydrate degradation; glycolysis; D-glyceraldehyde 3-phosphate and glycerone phosphate from D-glucose: step 2/4. In terms of biological role, catalyzes the reversible isomerization of glucose-6-phosphate to fructose-6-phosphate. The protein is Glucose-6-phosphate isomerase of Chlamydia caviae (strain ATCC VR-813 / DSM 19441 / 03DC25 / GPIC) (Chlamydophila caviae).